The primary structure comprises 251 residues: uncharacterized protein (251 aa).

Residues 1–25 (MRKKKFLSRFSFSSLFLLCGTLLSA) form the signal peptide. Cys-26 is lipidated: N-palmitoyl cysteine. A lipid anchor (S-diacylglycerol cysteine) is attached at Cys-26.

This sequence belongs to the MG439/MG440 family.

The protein resides in the cell membrane. This is an uncharacterized protein from Mycoplasma pneumoniae (strain ATCC 29342 / M129 / Subtype 1) (Mycoplasmoides pneumoniae).